We begin with the raw amino-acid sequence, 115 residues long: NAD(P)H-quinone oxidoreductase subunit M (115 aa).

It belongs to the complex I NdhM subunit family. As to quaternary structure, NDH-1 can be composed of about 15 different subunits; different subcomplexes with different compositions have been identified which probably have different functions.

It localises to the cellular thylakoid membrane. The catalysed reaction is a plastoquinone + NADH + (n+1) H(+)(in) = a plastoquinol + NAD(+) + n H(+)(out). It carries out the reaction a plastoquinone + NADPH + (n+1) H(+)(in) = a plastoquinol + NADP(+) + n H(+)(out). NDH-1 shuttles electrons from an unknown electron donor, via FMN and iron-sulfur (Fe-S) centers, to quinones in the respiratory and/or the photosynthetic chain. The immediate electron acceptor for the enzyme in this species is believed to be plastoquinone. Couples the redox reaction to proton translocation, and thus conserves the redox energy in a proton gradient. Cyanobacterial NDH-1 also plays a role in inorganic carbon-concentration. In Parasynechococcus marenigrum (strain WH8102), this protein is NAD(P)H-quinone oxidoreductase subunit M.